The sequence spans 92 residues: Small ribosomal subunit protein uS19c (92 aa).

The protein belongs to the universal ribosomal protein uS19 family.

The protein localises to the plastid. Its subcellular location is the chloroplast. Protein S19 forms a complex with S13 that binds strongly to the 16S ribosomal RNA. The polypeptide is Small ribosomal subunit protein uS19c (Piper cenocladum (Ant piper)).